Here is a 211-residue protein sequence, read N- to C-terminus: Protein-methionine-sulfoxide reductase heme-binding subunit MsrQ (211 aa).

The next 5 helical transmembrane spans lie at 10 to 30 (WLKV…VWAI), 82 to 102 (LWCF…ELGV), 116 to 136 (PYLT…FTST), 153 to 173 (FVYL…KIIS), and 178 to 198 (IYAG…LSLF).

It belongs to the MsrQ family. In terms of assembly, heterodimer of a catalytic subunit (MsrP) and a heme-binding subunit (MsrQ). FMN serves as cofactor. Requires heme b as cofactor.

Its subcellular location is the cell inner membrane. Functionally, part of the MsrPQ system that repairs oxidized periplasmic proteins containing methionine sulfoxide residues (Met-O), using respiratory chain electrons. Thus protects these proteins from oxidative-stress damage caused by reactive species of oxygen and chlorine generated by the host defense mechanisms. MsrPQ is essential for the maintenance of envelope integrity under bleach stress, rescuing a wide series of structurally unrelated periplasmic proteins from methionine oxidation, including the primary periplasmic chaperone SurA and the lipoprotein Pal. MsrQ provides electrons for reduction to the reductase catalytic subunit MsrP, using the quinone pool of the respiratory chain. The sequence is that of Protein-methionine-sulfoxide reductase heme-binding subunit MsrQ from Escherichia coli (strain 55989 / EAEC).